A 186-amino-acid polypeptide reads, in one-letter code: Der GTPase-activating protein YihI (186 aa).

Residues 39–77 are disordered; the sequence is LDAKAREDKKKRKHKGLASGSRHSAVEEKANKLQNEIKD. Basic and acidic residues predominate over residues 62–77; sequence SAVEEKANKLQNEIKD.

This sequence belongs to the YihI family. In terms of assembly, interacts with Der.

In terms of biological role, a GTPase-activating protein (GAP) that modifies Der/EngA GTPase function. May play a role in ribosome biogenesis. This chain is Der GTPase-activating protein YihI, found in Haemophilus influenzae (strain 86-028NP).